An 89-amino-acid chain; its full sequence is Small ribosomal subunit protein uS15 (89 aa).

Belongs to the universal ribosomal protein uS15 family. In terms of assembly, part of the 30S ribosomal subunit. Forms a bridge to the 50S subunit in the 70S ribosome, contacting the 23S rRNA.

Functionally, one of the primary rRNA binding proteins, it binds directly to 16S rRNA where it helps nucleate assembly of the platform of the 30S subunit by binding and bridging several RNA helices of the 16S rRNA. Forms an intersubunit bridge (bridge B4) with the 23S rRNA of the 50S subunit in the ribosome. This Pectobacterium atrosepticum (strain SCRI 1043 / ATCC BAA-672) (Erwinia carotovora subsp. atroseptica) protein is Small ribosomal subunit protein uS15.